The primary structure comprises 213 residues: Imidazole glycerol phosphate synthase subunit HisH (213 aa).

The Glutamine amidotransferase type-1 domain maps to 4 to 213; the sequence is SIAIVDYGMG…LYRNFVHWKP (210 aa). Cys-83 acts as the Nucleophile in catalysis. Catalysis depends on residues His-193 and Glu-195.

In terms of assembly, heterodimer of HisH and HisF.

The protein localises to the cytoplasm. The catalysed reaction is 5-[(5-phospho-1-deoxy-D-ribulos-1-ylimino)methylamino]-1-(5-phospho-beta-D-ribosyl)imidazole-4-carboxamide + L-glutamine = D-erythro-1-(imidazol-4-yl)glycerol 3-phosphate + 5-amino-1-(5-phospho-beta-D-ribosyl)imidazole-4-carboxamide + L-glutamate + H(+). It catalyses the reaction L-glutamine + H2O = L-glutamate + NH4(+). Its pathway is amino-acid biosynthesis; L-histidine biosynthesis; L-histidine from 5-phospho-alpha-D-ribose 1-diphosphate: step 5/9. IGPS catalyzes the conversion of PRFAR and glutamine to IGP, AICAR and glutamate. The HisH subunit catalyzes the hydrolysis of glutamine to glutamate and ammonia as part of the synthesis of IGP and AICAR. The resulting ammonia molecule is channeled to the active site of HisF. The sequence is that of Imidazole glycerol phosphate synthase subunit HisH from Burkholderia lata (strain ATCC 17760 / DSM 23089 / LMG 22485 / NCIMB 9086 / R18194 / 383).